The sequence spans 381 residues: Sterol 24-C-methyltransferase ERG6A (381 aa).

Belongs to the class I-like SAM-binding methyltransferase superfamily. Erg6/SMT family.

The enzyme catalyses lanosterol + S-adenosyl-L-methionine = eburicol + S-adenosyl-L-homocysteine + H(+). Its pathway is steroid metabolism; ergosterol biosynthesis. Sterol 24-C-methyltransferase; part of the third module of ergosterol biosynthesis pathway that includes the late steps of the pathway. ERG6A and ERG6B methylate lanosterol at C-24 to produce eburicol. The third module or late pathway involves the ergosterol synthesis itself through consecutive reactions that mainly occur in the endoplasmic reticulum (ER) membrane. Firstly, the squalene synthase ERG9 catalyzes the condensation of 2 farnesyl pyrophosphate moieties to form squalene, which is the precursor of all steroids. Squalene synthase is crucial for balancing the incorporation of farnesyl diphosphate (FPP) into sterol and nonsterol isoprene synthesis. Secondly, squalene is converted into lanosterol by the consecutive action of the squalene epoxidase ERG1 and the lanosterol synthase ERG7. Then, the delta(24)-sterol C-methyltransferase ERG6 methylates lanosterol at C-24 to produce eburicol. Eburicol is the substrate of the sterol 14-alpha demethylase encoded by CYP51A, CYP51B and CYP51C, to yield 4,4,24-trimethyl ergosta-8,14,24(28)-trienol. CYP51B encodes the enzyme primarily responsible for sterol 14-alpha-demethylation, and plays an essential role in ascospore formation. CYP51A encodes an additional sterol 14-alpha-demethylase, induced on ergosterol depletion and responsible for the intrinsic variation in azole sensitivity. The third CYP51 isoform, CYP51C, does not encode a sterol 14-alpha-demethylase, but is required for full virulence on host wheat ears. The C-14 reductase ERG24 then reduces the C14=C15 double bond which leads to 4,4-dimethylfecosterol. A sequence of further demethylations at C-4, involving the C-4 demethylation complex containing the C-4 methylsterol oxidases ERG25, the sterol-4-alpha-carboxylate 3-dehydrogenase ERG26 and the 3-keto-steroid reductase ERG27, leads to the production of fecosterol via 4-methylfecosterol. ERG28 has a role as a scaffold to help anchor ERG25, ERG26 and ERG27 to the endoplasmic reticulum. The C-8 sterol isomerase ERG2 then catalyzes the reaction which results in unsaturation at C-7 in the B ring of sterols and thus converts fecosterol to episterol. The sterol-C5-desaturases ERG3A and ERG3BB then catalyze the introduction of a C-5 double bond in the B ring to produce 5-dehydroepisterol. The C-22 sterol desaturases ERG5A and ERG5B further convert 5-dehydroepisterol into ergosta-5,7,22,24(28)-tetraen-3beta-ol by forming the C-22(23) double bond in the sterol side chain. Finally, ergosta-5,7,22,24(28)-tetraen-3beta-ol is substrate of the C-24(28) sterol reductase ERG4 to produce ergosterol. In Gibberella zeae (strain ATCC MYA-4620 / CBS 123657 / FGSC 9075 / NRRL 31084 / PH-1) (Wheat head blight fungus), this protein is Sterol 24-C-methyltransferase ERG6A (FG02783.1).